The following is a 364-amino-acid chain: Methylthioribose-1-phosphate isomerase (364 aa).

Asp-254 acts as the Proton donor in catalysis.

This sequence belongs to the eIF-2B alpha/beta/delta subunits family. MtnA subfamily.

It is found in the cytoplasm. The protein localises to the nucleus. The catalysed reaction is 5-(methylsulfanyl)-alpha-D-ribose 1-phosphate = 5-(methylsulfanyl)-D-ribulose 1-phosphate. The protein operates within amino-acid biosynthesis; L-methionine biosynthesis via salvage pathway; L-methionine from S-methyl-5-thio-alpha-D-ribose 1-phosphate: step 1/6. Functionally, catalyzes the interconversion of methylthioribose-1-phosphate (MTR-1-P) into methylthioribulose-1-phosphate (MTRu-1-P). This is Methylthioribose-1-phosphate isomerase from Drosophila ananassae (Fruit fly).